We begin with the raw amino-acid sequence, 402 residues long: Diaminopimelate decarboxylase (402 aa).

Lys-45 is subject to N6-(pyridoxal phosphate)lysine. Pyridoxal 5'-phosphate contacts are provided by residues Gly-224 and 259–262 (EPGR). Substrate-binding residues include Arg-262, Arg-298, and Tyr-302. The active-site Proton donor is the Cys-327. Residues Glu-328 and Tyr-356 each coordinate substrate. Residue Tyr-356 participates in pyridoxal 5'-phosphate binding.

Belongs to the Orn/Lys/Arg decarboxylase class-II family. LysA subfamily. In terms of assembly, homodimer. Requires pyridoxal 5'-phosphate as cofactor.

It catalyses the reaction meso-2,6-diaminopimelate + H(+) = L-lysine + CO2. The protein operates within amino-acid biosynthesis; L-lysine biosynthesis via DAP pathway; L-lysine from DL-2,6-diaminopimelate: step 1/1. Its function is as follows. Specifically catalyzes the decarboxylation of meso-diaminopimelate (meso-DAP) to L-lysine. This is Diaminopimelate decarboxylase from Campylobacter jejuni subsp. jejuni serotype O:2 (strain ATCC 700819 / NCTC 11168).